A 495-amino-acid chain; its full sequence is uncharacterized protein (495 aa).

A CHY-type zinc finger spans residues 389-457 (PLPNNGACEH…KDATCPHCGN (69 aa)). Zn(2+) is bound by residues Cys-396, His-398, Cys-410, Cys-411, Cys-417, Cys-420, His-421, His-427, Cys-437, Cys-440, Cys-452, and Cys-455. Positions 473 to 483 (GMRDRVRMSRK) are enriched in basic and acidic residues. Residues 473–495 (GMRDRVRMSRKDPRKYKRKHHGN) are disordered. Over residues 484–495 (DPRKYKRKHHGN) the composition is skewed to basic residues.

Its subcellular location is the cytoplasm. This is an uncharacterized protein from Schizosaccharomyces pombe (strain 972 / ATCC 24843) (Fission yeast).